Here is an 839-residue protein sequence, read N- to C-terminus: Molybdenum cofactor sulfurase (839 aa).

The residue at position 237 (Lys-237) is an N6-(pyridoxal phosphate)lysine. Residue Cys-401 is part of the active site. Over residues 651–662 (DQNYSQKQSPSM) the composition is skewed to polar residues. The interval 651–678 (DQNYSQKQSPSMPGSFPQAPSSPDPYPT) is disordered. The MOSC domain occupies 656 to 834 (QKQSPSMPGS…IMVGDAVTPS (179 aa)).

The protein belongs to the class-V pyridoxal-phosphate-dependent aminotransferase family. MOCOS subfamily. Pyridoxal 5'-phosphate serves as cofactor.

It catalyses the reaction Mo-molybdopterin + L-cysteine + AH2 = thio-Mo-molybdopterin + L-alanine + A + H2O. It participates in cofactor biosynthesis; molybdopterin biosynthesis. Sulfurates the molybdenum cofactor. Sulfation of molybdenum is essential for xanthine dehydrogenase (XDH) and aldehyde oxidase (ADO) enzymes in which molybdenum cofactor is liganded by 1 oxygen and 1 sulfur atom in active form. The chain is Molybdenum cofactor sulfurase from Emericella nidulans (strain FGSC A4 / ATCC 38163 / CBS 112.46 / NRRL 194 / M139) (Aspergillus nidulans).